Reading from the N-terminus, the 725-residue chain is Lipoamidase (725 aa).

The tract at residues 1-52 (MLAQESILETTVQTETESVTTETSQTVANLESETTSQTVMQEKESSSAIAES) is disordered. A compositionally biased stretch (low complexity) spans 9-27 (ETTVQTETESVTTETSQTV). Residues 28–40 (ANLESETTSQTVM) are compositionally biased toward polar residues. Residues Lys159 and Ser235 each act as charge relay system in the active site. Ser259 (acyl-ester intermediate) is an active-site residue. Residues 551–686 (KINQPHVEEP…NKSMIGKQEQ (136 aa)) are disordered. Residues 556-637 (HVEEPDKDKE…TSEGPIEGKD (82 aa)) show a composition bias toward basic and acidic residues. The segment covering 650–661 (SGSSLDNSLNSS) has biased composition (low complexity). Residues 662–679 (ANQGTKSTESTHAFSNKS) are compositionally biased toward polar residues. A helical membrane pass occupies residues 700-720 (PSTFWIVLGGAFLVTSGTIYI).

This sequence belongs to the amidase family. In terms of assembly, homodimer in solution.

It localises to the cell membrane. It catalyses the reaction N(6)-[(R)-lipoyl]-L-lysyl-[lipoyl-carrier protein] + H2O = L-lysyl-[lipoyl-carrier protein] + (R)-lipoate. Lipoamidase activity is slightly inhibited by p-chloromercuribenzoate. In terms of biological role, amidohydrolase that releases lipoic acid from the protein-bound form. Cleaves the amide bond that links lipoic acid to the lipoylated lysine epsilon-amino groups, leading to the formation of free lipoic acid plus the unmodified protein. Shows activity toward both high molecular weight protein substrates such as a lipoyl domain and intact 2-oxoacid dehydrogenases as well as small molecule substrates such as lipoyl-lysine. Also acts on small biotinylated substrates. Hydrolyzes the synthetic substrates methyl lipoate and lipoamide. The physiologically important substrates are probably lipoyl-lysine and small peptides containing lipoyl-lysine. Lpa seems likely to enable this bacterium to utilize amide-linked forms of lipoic acid that otherwise could not be assimilated. The polypeptide is Lipoamidase (Enterococcus faecalis (Streptococcus faecalis)).